The chain runs to 546 residues: Chaperonin GroEL (546 aa).

ATP is bound by residues 30–33, K51, 87–91, G415, 479–481, and D495; these read TLGP, DGTTT, and NAA.

The protein belongs to the chaperonin (HSP60) family. In terms of assembly, forms a cylinder of 14 subunits composed of two heptameric rings stacked back-to-back. Interacts with the co-chaperonin GroES.

It is found in the cytoplasm. The enzyme catalyses ATP + H2O + a folded polypeptide = ADP + phosphate + an unfolded polypeptide.. Together with its co-chaperonin GroES, plays an essential role in assisting protein folding. The GroEL-GroES system forms a nano-cage that allows encapsulation of the non-native substrate proteins and provides a physical environment optimized to promote and accelerate protein folding. The sequence is that of Chaperonin GroEL from Paraburkholderia phytofirmans (strain DSM 17436 / LMG 22146 / PsJN) (Burkholderia phytofirmans).